The sequence spans 835 residues: Protein translocase subunit SecA 1 (835 aa).

Residues Gln-85, 103 to 107, and Asp-492 contribute to the ATP site; that span reads GEGKT. The disordered stretch occupies residues 788 to 807; that stretch reads VQGEAVHPSSDGEEAKKKPV. Zn(2+)-binding residues include Cys-819, Cys-821, Cys-830, and Cys-831.

Belongs to the SecA family. In terms of assembly, monomer and homodimer. Part of the essential Sec protein translocation apparatus which comprises SecA, SecYEG and auxiliary proteins SecDF. Other proteins may also be involved. The cofactor is Zn(2+).

The protein localises to the cell membrane. Its subcellular location is the cytoplasm. The enzyme catalyses ATP + H2O + cellular proteinSide 1 = ADP + phosphate + cellular proteinSide 2.. Its function is as follows. Part of the Sec protein translocase complex. Interacts with the SecYEG preprotein conducting channel. Has a central role in coupling the hydrolysis of ATP to the transfer of proteins into and across the cell membrane, serving as an ATP-driven molecular motor driving the stepwise translocation of polypeptide chains across the membrane. The protein is Protein translocase subunit SecA 1 of Bacillus anthracis.